The primary structure comprises 141 residues: Nucleoside triphosphatase NudI (141 aa).

The Nudix hydrolase domain maps to 1–141 (MRQRTIVCPL…RVTLSQKGLL (141 aa)). A Nudix box motif is present at residues 38–59 (GGVEPVERIEEALRREIREELG).

The protein belongs to the Nudix hydrolase family. NudI subfamily. As to quaternary structure, monomer. Mg(2+) is required as a cofactor.

The enzyme catalyses a ribonucleoside 5'-triphosphate + H2O = a ribonucleoside 5'-phosphate + diphosphate + H(+). The catalysed reaction is a 2'-deoxyribonucleoside 5'-triphosphate + H2O = a 2'-deoxyribonucleoside 5'-phosphate + diphosphate + H(+). It carries out the reaction dUTP + H2O = dUMP + diphosphate + H(+). It catalyses the reaction dTTP + H2O = dTMP + diphosphate + H(+). The enzyme catalyses dCTP + H2O = dCMP + diphosphate + H(+). Its function is as follows. Catalyzes the hydrolysis of nucleoside triphosphates, with a preference for pyrimidine deoxynucleoside triphosphates (dUTP, dTTP and dCTP). The chain is Nucleoside triphosphatase NudI from Klebsiella pneumoniae (strain 342).